A 935-amino-acid chain; its full sequence is Phosphoenolpyruvate carboxylase (935 aa).

Catalysis depends on residues His161 and Lys593.

It belongs to the PEPCase type 1 family. Requires Mg(2+) as cofactor.

The enzyme catalyses oxaloacetate + phosphate = phosphoenolpyruvate + hydrogencarbonate. Functionally, forms oxaloacetate, a four-carbon dicarboxylic acid source for the tricarboxylic acid cycle. The chain is Phosphoenolpyruvate carboxylase from Mycolicibacterium paratuberculosis (strain ATCC BAA-968 / K-10) (Mycobacterium paratuberculosis).